Reading from the N-terminus, the 367-residue chain is Cis-3-hydroxy-L-proline dehydratase (367 aa).

K165 serves as the catalytic Proton donor/acceptor. Mg(2+)-binding residues include D193, E218, and D241. Residue K265 is the Proton donor/acceptor of the active site.

It belongs to the mandelate racemase/muconate lactonizing enzyme family. Requires Mg(2+) as cofactor.

The enzyme catalyses cis-3-hydroxy-L-proline = 1-pyrroline-2-carboxylate + H2O. Its function is as follows. Catalyzes the dehydration of cis-3-hydroxy-L-proline (c3LHyp) to Delta(1)-pyrroline-2-carboxylate (Pyr2C). Is likely involved in a degradation pathway that converts c3LHyp to L-proline, which allows L.aggregata to grow on c3LHyp as a sole carbon source. Also catalyzes the epimerization of c3LHyp to trans-3-hydroxy-D-proline (t3DHyp), a competing reaction occurring from the same enolate anion intermediate. L-proline, t3LHyp, t4LHyp, c4DHyp and their methylated derivatives are not substrates. This Roseibium aggregatum (strain ATCC 25650 / DSM 13394 / JCM 20685 / NBRC 16684 / NCIMB 2208 / IAM 12614 / B1) (Stappia aggregata) protein is Cis-3-hydroxy-L-proline dehydratase.